The chain runs to 511 residues: Maturase K (511 aa).

It belongs to the intron maturase 2 family. MatK subfamily.

Its subcellular location is the plastid. The protein localises to the chloroplast. Its function is as follows. Usually encoded in the trnK tRNA gene intron. Probably assists in splicing its own and other chloroplast group II introns. This chain is Maturase K, found in Brachypodium sylvaticum (False brome).